A 476-amino-acid polypeptide reads, in one-letter code: Siroheme synthase (476 aa).

Residues 1-207 (MTANVLFPLF…QRHAEAEAVL (207 aa)) are precorrin-2 dehydrogenase /sirohydrochlorin ferrochelatase. Residues 25 to 26 (KV) and 46 to 47 (PS) contribute to the NAD(+) site. Position 132 is a phosphoserine (serine 132). The interval 220–476 (GSVTLVGAGA…SAPCPPALIL (257 aa)) is uroporphyrinogen-III C-methyltransferase. The active-site Proton acceptor is aspartate 252. Lysine 274 functions as the Proton donor in the catalytic mechanism. S-adenosyl-L-methionine contacts are provided by residues 305 to 307 (GGD), valine 310, 335 to 336 (TA), methionine 387, and glycine 416.

In the N-terminal section; belongs to the precorrin-2 dehydrogenase / sirohydrochlorin ferrochelatase family. This sequence in the C-terminal section; belongs to the precorrin methyltransferase family.

It carries out the reaction uroporphyrinogen III + 2 S-adenosyl-L-methionine = precorrin-2 + 2 S-adenosyl-L-homocysteine + H(+). The catalysed reaction is precorrin-2 + NAD(+) = sirohydrochlorin + NADH + 2 H(+). The enzyme catalyses siroheme + 2 H(+) = sirohydrochlorin + Fe(2+). It functions in the pathway cofactor biosynthesis; adenosylcobalamin biosynthesis; precorrin-2 from uroporphyrinogen III: step 1/1. It participates in cofactor biosynthesis; adenosylcobalamin biosynthesis; sirohydrochlorin from precorrin-2: step 1/1. The protein operates within porphyrin-containing compound metabolism; siroheme biosynthesis; precorrin-2 from uroporphyrinogen III: step 1/1. Its pathway is porphyrin-containing compound metabolism; siroheme biosynthesis; siroheme from sirohydrochlorin: step 1/1. It functions in the pathway porphyrin-containing compound metabolism; siroheme biosynthesis; sirohydrochlorin from precorrin-2: step 1/1. Its function is as follows. Multifunctional enzyme that catalyzes the SAM-dependent methylations of uroporphyrinogen III at position C-2 and C-7 to form precorrin-2 via precorrin-1. Then it catalyzes the NAD-dependent ring dehydrogenation of precorrin-2 to yield sirohydrochlorin. Finally, it catalyzes the ferrochelation of sirohydrochlorin to yield siroheme. The sequence is that of Siroheme synthase from Xylella fastidiosa (strain 9a5c).